A 525-amino-acid polypeptide reads, in one-letter code: Asparagine synthetase domain-containing protein YML096W (525 aa).

Cys-2 (for GATase activity) is an active-site residue. The Glutamine amidotransferase type-2 domain maps to Cys-2–Pro-209. The region spanning Tyr-210–Asn-523 is the Asparagine synthetase domain. The interval Ser-503–Ser-525 is disordered. Over residues Met-506–Ser-525 the composition is skewed to basic and acidic residues.

It is found in the cytoplasm. This chain is Asparagine synthetase domain-containing protein YML096W, found in Saccharomyces cerevisiae (strain ATCC 204508 / S288c) (Baker's yeast).